We begin with the raw amino-acid sequence, 136 residues long: General odorant-binding protein 57d (136 aa).

A signal peptide spans 1 to 29; that stretch reads MPEKMSLRLVPHLACIIFILEIQFRIADS. 3 disulfide bridges follow: Cys-33/Cys-70, Cys-66/Cys-118, and Cys-107/Cys-127.

This sequence belongs to the PBP/GOBP family.

Functionally, present in the aqueous fluid surrounding olfactory sensory dendrites and are thought to aid in the capture and transport of hydrophobic odorants into and through this fluid. The sequence is that of General odorant-binding protein 57d from Drosophila melanogaster (Fruit fly).